A 336-amino-acid polypeptide reads, in one-letter code: Gastrula zinc finger protein XlCGF57.1 (336 aa).

C2H2-type zinc fingers lie at residues 6–28, 34–56, 62–84, 90–112, 118–140, 146–168, 174–196, 202–224, 230–252, 258–280, and 286–308; these read YTCTECGKGFIKKSRLVTHMKIH, FICTECGKGFSQKGILQTHMKTH, FTCTECGKNFAQITTLLRHLTIH, FSCTECGKHFAHKGHLVSHMKTH, FTCTECGKHFAQKGHLVSHMKTH, FTCTECGKNFAQKTNLLCHLKIH, FTCTECGDKFAKKNNLLRHLKIH, FTCTECGKAFTLKGSLVGHMKIH, FSCTQCGKNFTQKNSLLCHLTMH, FTCTECGKGFALKGNLVLHTKIH, and FSCTQCGKNFAQKNSLLRHLKIH.

The protein belongs to the krueppel C2H2-type zinc-finger protein family.

It localises to the nucleus. May be involved in transcriptional regulation. This chain is Gastrula zinc finger protein XlCGF57.1, found in Xenopus laevis (African clawed frog).